Here is an 845-residue protein sequence, read N- to C-terminus: Beta-mannosidase B (845 aa).

The interval Met-1 to Asp-20 is disordered. Asn-252 is a glycosylation site (N-linked (GlcNAc...) asparagine). Glu-432 acts as the Proton donor in catalysis. N-linked (GlcNAc...) asparagine glycosylation is found at Asn-717 and Asn-723.

This sequence belongs to the glycosyl hydrolase 2 family. Beta-mannosidase B subfamily.

It catalyses the reaction Hydrolysis of terminal, non-reducing beta-D-mannose residues in beta-D-mannosides.. It participates in glycan metabolism; N-glycan degradation. Its function is as follows. Exoglycosidase that cleaves the single beta-linked mannose residue from the non-reducing end of beta-mannosidic oligosaccharides of various complexity and length. Prefers mannobiose over mannotriose and has no activity against polymeric mannan. Is also severely restricted by galactosyl substitutions at the +1 subsite. The chain is Beta-mannosidase B (mndB) from Neosartorya fischeri (strain ATCC 1020 / DSM 3700 / CBS 544.65 / FGSC A1164 / JCM 1740 / NRRL 181 / WB 181) (Aspergillus fischerianus).